The chain runs to 225 residues: Ribose-5-phosphate isomerase A (225 aa).

Substrate-binding positions include 27–30, 82–85, and 95–98; these read SGST, DGAD, and KGGG. The active-site Proton acceptor is E104. K122 lines the substrate pocket.

Belongs to the ribose 5-phosphate isomerase family. Homodimer.

It carries out the reaction aldehydo-D-ribose 5-phosphate = D-ribulose 5-phosphate. It participates in carbohydrate degradation; pentose phosphate pathway; D-ribose 5-phosphate from D-ribulose 5-phosphate (non-oxidative stage): step 1/1. Catalyzes the reversible conversion of ribose-5-phosphate to ribulose 5-phosphate. The chain is Ribose-5-phosphate isomerase A from Archaeoglobus fulgidus (strain ATCC 49558 / DSM 4304 / JCM 9628 / NBRC 100126 / VC-16).